Reading from the N-terminus, the 611-residue chain is Major facilitator superfamily domain-containing protein YCR023C (611 aa).

Over 1-89 the chain is Extracellular; sequence MARQKLTFKE…GRFSEKHGRK (89 aa). The chain crosses the membrane as a helical span at residues 90–110; sequence ITLTCGLIGTSVSLLILGFSR. Topologically, residues 111–152 are cytoplasmic; that stretch reads NFYQALVARSLMGLLNGNVGVIRTIIGEIATERKHQALAFST. The chain crosses the membrane as a helical span at residues 153 to 173; it reads MPLLFQFGAVVGPMIGGFLVF. At 174–199 the chain is on the extracellular side; the sequence is RDGTMNEVPLWFPHFAKRIIRSYPYA. Residues 200-220 traverse the membrane as a helical segment; it reads LPNVVVCMFLMFGLTNATLFL. The Cytoplasmic segment spans residues 221–353; sequence EETHPAFKDR…SIFHHVFHTK (133 aa). A compositionally biased stretch (basic and acidic residues) spans 261–271; the sequence is DDSENIHHRNE. The tract at residues 261-301 is disordered; it reads DDSENIHHRNENVNSIRGQDSEEDENSPLVNTTNDDDTESI. Position 313 is a phosphoserine (S313). The helical transmembrane segment at 354–372 threads the bilayer; it reads VFYPISVNFIMALHLIVYN. Residues 373-413 are Extracellular-facing; sequence EFLPVFLAYDLAVDPENPKKLASKFPWKISGGIGYEPEQTG. The chain crosses the membrane as a helical span at residues 414–434; it reads TLLSTTGIFGCFVVIFIFPIV. Topologically, residues 435–442 are cytoplasmic; sequence DRNFDCLT. The chain crosses the membrane as a helical span at residues 443-463; sequence IFRTLVKLYPIMYVMVPYVVF. Over 464 to 542 the chain is Extracellular; it reads LQNERIPSWY…YIMSWSQQND (79 aa). The helical transmembrane segment at 543–563 threads the bilayer; the sequence is VAWVSWWSLSLFCMVALYQSY. Topologically, residues 564-611 are cytoplasmic; that stretch reads KIAPIDDNENELHGQGSEDAYNSQSQSSDLRMAHRSSLSSLSNQRCTT. Position 603 is a phosphoserine (S603).

It belongs to the major facilitator superfamily.

The protein localises to the membrane. The enzyme catalyses chloride(in) = chloride(out). Functionally, outward-rectifying chloride channel involved in chloride homeostasis. This is Major facilitator superfamily domain-containing protein YCR023C from Saccharomyces cerevisiae (strain ATCC 204508 / S288c) (Baker's yeast).